The chain runs to 254 residues: 5-oxoprolinase subunit A 1 (254 aa).

It belongs to the LamB/PxpA family. Forms a complex composed of PxpA, PxpB and PxpC.

The catalysed reaction is 5-oxo-L-proline + ATP + 2 H2O = L-glutamate + ADP + phosphate + H(+). Its function is as follows. Catalyzes the cleavage of 5-oxoproline to form L-glutamate coupled to the hydrolysis of ATP to ADP and inorganic phosphate. The protein is 5-oxoprolinase subunit A 1 of Burkholderia pseudomallei (strain K96243).